A 756-amino-acid chain; its full sequence is Virulence factor MDV010 (756 aa).

Residues 1-30 (MPSKSIADHHAGYGVALAIVALLLIHGTAL) form the signal peptide. Positions 96–120 (EEHITLSSPRTSTKTTNENGHEKDS) are disordered. A compositionally biased stretch (polar residues) spans 100–113 (TLSSPRTSTKTTNE). N-linked (GlcNAc...) asparagine; by host glycans are attached at residues Asn-222, Asn-241, Asn-287, Asn-423, Asn-495, Asn-542, Asn-552, Asn-580, Asn-660, Asn-684, Asn-715, and Asn-744.

Its subcellular location is the secreted. Its function is as follows. May play a role in host immune modulation since the protein is secreted and provides an advantage for growth in vivo while it is completely dispensable in cell culture. This chain is Virulence factor MDV010 (MDV010), found in Gallid herpesvirus 2 (strain Chicken/Md5/ATCC VR-987) (GaHV-2).